Reading from the N-terminus, the 538-residue chain is Fructooligosaccharide ABC transporter substrate-binding protein FusA (538 aa).

A signal peptide spans 1–22 (MKFKTFSKSAVLLTASLAVLAA). A lipid anchor (N-palmitoyl cysteine) is attached at Cys-23. Cys-23 is lipidated: S-diacylglycerol cysteine. Glu-167 serves as a coordination point for substrate. Asp-215, Asn-217, Asn-219, Glu-221, Asp-223, and Glu-224 together coordinate Ca(2+). Asn-235 is a binding site for substrate. Residues Asp-263, Phe-264, Asp-267, and Asn-268 each coordinate Ca(2+). The substrate site is built by Trp-314, Asn-318, Lys-353, Trp-384, Arg-419, and Glu-423.

It belongs to the bacterial solute-binding protein 1 family. In terms of assembly, the complex is composed of two ATP-binding proteins (MsmK), two transmembrane proteins (FusB and FusC) and a solute-binding protein (FusA).

It localises to the cell membrane. Its function is as follows. Part of the ABC transporter complex FusABC-MsmK involved in short- and long-chain fructooligosaccharide (FOS) import. Required for the utilization of long-chain FOSs. Binds kestose, nystose, fructofuranosyl-nystose and inulin, but not sucrose. Has a preference for long-chain FOSs (tetrasaccharides and larger). The polypeptide is Fructooligosaccharide ABC transporter substrate-binding protein FusA (Streptococcus pneumoniae serotype 4 (strain ATCC BAA-334 / TIGR4)).